A 178-amino-acid polypeptide reads, in one-letter code: Large ribosomal subunit protein uL6 (178 aa).

This sequence belongs to the universal ribosomal protein uL6 family. In terms of assembly, part of the 50S ribosomal subunit.

Functionally, this protein binds to the 23S rRNA, and is important in its secondary structure. It is located near the subunit interface in the base of the L7/L12 stalk, and near the tRNA binding site of the peptidyltransferase center. The polypeptide is Large ribosomal subunit protein uL6 (Symbiobacterium thermophilum (strain DSM 24528 / JCM 14929 / IAM 14863 / T)).